Reading from the N-terminus, the 371-residue chain is MNGSDSQGAEDSSQEGGGGWQPEAVLVPLFFALIFLVGAVGNALVLAVLLRGGQAVSTTNLFILNLGVADLCFILCCVPFQATIYTLDDWVFGSLLCKAVHFLIFLTMHASSFTLAAVSLDRYLAIRYPLHSRELRTPRNALAAIGLIWGLALLFSGPYLSYYSQSQLANLTVCHPAWSAPRRRAMDLCTFVFSYLLPVLVLSLTYARTLHYLWRTVDPVAAGSGSQRAKRKVTRMIVIVAVLFCLCWMPHHALILCVWFGRFPLTRATYALRILSHLVSYANSCVNPIVYALVSKHFRKGFRKICAGLLRRAPRRASGRVCILAPGNHSGGMLEPESTDLTQVSEAAGPLVPAPALPNCTTLSRTLDPAC.

Over 1 to 27 (MNGSDSQGAEDSSQEGGGGWQPEAVLV) the chain is Extracellular. An N-linked (GlcNAc...) asparagine glycan is attached at N2. A helical membrane pass occupies residues 28 to 48 (PLFFALIFLVGAVGNALVLAV). Topologically, residues 49–59 (LLRGGQAVSTT) are cytoplasmic. Residues 60-80 (NLFILNLGVADLCFILCCVPF) form a helical membrane-spanning segment. Residues 81–98 (QATIYTLDDWVFGSLLCK) lie on the Extracellular side of the membrane. C97 and C174 form a disulfide bridge. A helical transmembrane segment spans residues 99 to 120 (AVHFLIFLTMHASSFTLAAVSL). Topologically, residues 121–140 (DRYLAIRYPLHSRELRTPRN) are cytoplasmic. A helical transmembrane segment spans residues 141–161 (ALAAIGLIWGLALLFSGPYLS). Residues 162–186 (YYSQSQLANLTVCHPAWSAPRRRAM) lie on the Extracellular side of the membrane. The helical transmembrane segment at 187–207 (DLCTFVFSYLLPVLVLSLTYA) threads the bilayer. Topologically, residues 208–236 (RTLHYLWRTVDPVAAGSGSQRAKRKVTRM) are cytoplasmic. A helical transmembrane segment spans residues 237-257 (IVIVAVLFCLCWMPHHALILC). Residues 258 to 259 (VW) lie on the Extracellular side of the membrane. A helical membrane pass occupies residues 260–280 (FGRFPLTRATYALRILSHLVS). The Cytoplasmic portion of the chain corresponds to 281-371 (YANSCVNPIV…TLSRTLDPAC (91 aa)).

The protein belongs to the G-protein coupled receptor 1 family.

The protein resides in the cell membrane. Its function is as follows. Receptor for the hormone galanin, GALP and spexin-1. The activity of this receptor is mediated by G proteins that activate the phospholipase C/protein kinase C pathway (via G(q)) and that inhibit adenylyl cyclase (via G(i)). The polypeptide is Galanin receptor type 2 (Galr2) (Mus musculus (Mouse)).